Reading from the N-terminus, the 1016-residue chain is Poly [ADP-ribose] polymerase 1 (1016 aa).

Position 2 is an N-acetylalanine (Ala-2). Residues 9–93 (YRVEYAKSGR…TIKKMAETGG (85 aa)) form a PARP-type 1 zinc finger. Positions 21 and 24 each coordinate Zn(2+). Ser-41 carries the post-translational modification Phosphoserine. Residues His-53 and Cys-56 each coordinate Zn(2+). An N6-acetyllysine mark is found at Lys-100 and Lys-108. A PARP-type 2 zinc finger spans residues 116 to 206 (FGAGYAKSNR…TLKKQLPAIK (91 aa)). Residues Cys-128 and Cys-131 each contribute to the Zn(2+) site. Residue Lys-134 is modified to N6-acetyllysine. Zn(2+)-binding residues include His-162 and Cys-165. Ser-180 and Ser-188 each carry phosphoserine. Lys-206 participates in a covalent cross-link: Glycyl lysine isopeptide (Lys-Gly) (interchain with G-Cter in SUMO1); alternate. Residue Lys-206 forms a Glycyl lysine isopeptide (Lys-Gly) (interchain with G-Cter in SUMO2); alternate linkage. 2 consecutive short sequence motifs (nuclear localization signal) follow at residues 210–212 (KRK) and 224–229 (KKKSKK). One can recognise a PADR1 zinc-binding domain in the interval 228-362 (KKEKDKEIKL…IKKQDRIFPP (135 aa)). Lys-252 is covalently cross-linked (Glycyl lysine isopeptide (Lys-Gly) (interchain with G-Cter in SUMO2)). Phosphoserine occurs at positions 277 and 280. The segment at 293–335 (GALLPCEECSGQLVFKGDAYYCTGDVTAWTKCMVKTQTPNRKE) is zinc ribbon. Positions 298, 301, 314, and 324 each coordinate Zn(2+). The interval 360 to 390 (FPPESSTPVGAAAPPSAASAPAAVHSGPPDK) is disordered. Low complexity predominate over residues 365–386 (STPVGAAAPPSAASAPAAVHSG). Residues 376 to 526 (AASAPAAVHS…GTNKSEKRMK (151 aa)) form an automodification domain region. In terms of domain architecture, BRCT spans 387 to 478 (PPDKPLSNMK…KSLQELLSTH (92 aa)). Asp-389 carries the polyADP-ribosyl aspartic acid modification. Glu-409, Glu-415, Glu-437, Glu-446, Glu-447, Glu-450, and Glu-458 each carry polyADP-ribosyl glutamic acid. Residue Lys-469 forms a Glycyl lysine isopeptide (Lys-Gly) (interchain with G-Cter in SUMO2) linkage. 2 positions are modified to polyADP-ribosyl glutamic acid: Glu-473 and Glu-486. Lys-488 participates in a covalent cross-link: Glycyl lysine isopeptide (Lys-Gly) (interchain with G-Cter in SUMO1); alternate. Residue Lys-488 forms a Glycyl lysine isopeptide (Lys-Gly) (interchain with G-Cter in SUMO2); alternate linkage. 2 positions are modified to polyADP-ribosyl glutamic acid: Glu-490 and Glu-493. The tract at residues 494–523 (AVGPKGKSGAAPSKKSKGPVKEEGTNKSEK) is disordered. Residues 496 to 506 (GPKGKSGAAPS) show a composition bias toward low complexity. 3 positions are modified to ADP-ribosylserine: Ser-501, Ser-506, and Ser-509. Over residues 512–523 (PVKEEGTNKSEK) the composition is skewed to basic and acidic residues. Lys-514 participates in a covalent cross-link: Glycyl lysine isopeptide (Lys-Gly) (interchain with G-Cter in SUMO2). 2 positions are modified to polyADP-ribosyl glutamic acid: Glu-515 and Glu-516. Ser-521 is subject to ADP-ribosylserine. At Glu-522 the chain carries PolyADP-ribosyl glutamic acid. An N6-(ADP-ribosyl)lysine modification is found at Lys-523. A Glycyl lysine isopeptide (Lys-Gly) (interchain with G-Cter in SUMO2) cross-link involves residue Lys-530. One can recognise a WGR domain in the interval 544–640 (NAHVLEKGGK…KNFTKHPKKF (97 aa)). At Thr-596 the chain carries Phosphothreonine. Residues Lys-602 and Lys-623 each carry the N6-acetyllysine modification. Residues 664–781 (KSKLPKPVQN…DIEVAYSLLR (118 aa)) form the PARP alpha-helical domain. A Glycyl lysine isopeptide (Lys-Gly) (interchain with G-Cter in SUMO1); alternate cross-link involves residue Lys-750. Lys-750 is covalently cross-linked (Glycyl lysine isopeptide (Lys-Gly) (interchain with G-Cter in SUMO2); alternate). Phosphoserine is present on residues Ser-784 and Ser-788. The 227-residue stretch at 790 to 1016 (DPIDVNYEKL…LKFNFKTSLW (227 aa)) folds into the PARP catalytic domain. Residues 864-866 (HGS), Gly-873, Arg-880, and Ser-906 each bind NAD(+). Catalysis depends on Glu-990, which acts as the For poly [ADP-ribose] polymerase activity.

This sequence belongs to the ARTD/PARP family. Homodimer; PARP-type zinc-fingers from separate PARP1 molecules form a dimer module that specifically recognizes DNA strand breaks. Heterodimer; heterodimerizes with PARP2. Interacts (via the PARP catalytic domain) with HPF1. Interacts with NMNAT1. Interacts with nucleosomes; with a preference for nucleosomes containing H2A.X. Interacts with APTX. Component of a base excision repair (BER) complex, containing at least XRCC1, PARP1, PARP2, POLB and LRIG3. Interacts with SRY. The SWAP complex consists of NPM1, NCL, PARP1 and SWAP70. Interacts with TIAM2. Interacts with PARP3; leading to activate PARP1 in absence of DNA. Interacts (when poly-ADP-ribosylated) with CHD1L (via macro domain). Interacts with the DNA polymerase alpha catalytic subunit POLA1; this interaction functions as part of the control of replication fork progression. Interacts with EEF1A1 and TXK. Interacts with RNF4. Interacts with RNF146. Interacts with ZNF423. Interacts with APLF. Interacts with SNAI1 (via zinc fingers); the interaction requires SNAI1 to be poly-ADP-ribosylated and non-phosphorylated (active) by GSK3B. Interacts (when poly-ADP-ribosylated) with PARP9. Interacts with NR4A3; activates PARP1 by improving acetylation of PARP1 and suppressing the interaction between PARP1 and SIRT1. Interacts (via catalytic domain) with PUM3; the interaction inhibits the poly-ADP-ribosylation activity of PARP1 and the degradation of PARP1 by CASP3 following genotoxic stress. Interacts with ZNF365. Interacts with RRP1B. Interacts with TIMELESS; the interaction is direct. Interacts with CGAS; leading to impede the formation of the PARP1-TIMELESS complex. Interacts with KHDC3L, the interaction is increased following the formation of DNA double-strand breaks. Interacts (when auto-poly-ADP-ribosylated) with XRCC1; leading to inhibit PARP1 ADP-ribosyltransferase activity. Interacts with SPINDOC; promoting PARP1 ADP-ribosyltransferase activity. Interacts with BANF1; leading to inhibit PARP1 ADP-ribosyltransferase activity in response to oxidative DNA damage. Interacts (when sumoylated and ubiquitinated) with VCP/p97; leading to its extraction from chromatin. Interacts with YARS1; promoting PARP1 ADP-ribosyltransferase activity. Interacts with PACMP micropeptide; Interacts with PACMP micropeptide; interaction. Interacts (when poly-ADP-ribosylated) with isoform 1 of MACROH2A1; MACROH2A1 specifically binds to poly-ADP-ribose chains and inhibits PARP1 activity, limiting the consumption of nuclear NAD(+). Interacts with CARM1; promoting recruitment to replication forks. Interacts with RECQL. Interacts with ZNF32; the interaction reshapes ZNF432 interacting proteins. Interacts with TPRN; TPRN interacts with a number of DNA damage response proteins, is recruited to sites of DNA damage and may play a role in DNA damage repair. As to quaternary structure, interacts (when auto-poly-ADP-ribosylated) with AIFM1. In terms of processing, poly-ADP-ribosylated on serine, glutamate and aspartate residues by autocatalysis. Auto-ADP-ribosylation on serine takes place following interaction with HPF1. Auto poly-ADP-ribosylation on serine residues promotes its dissociation from chromatin. Poly-ADP-ribosylated by PARP2; poly-ADP-ribosylation mediates the recruitment of CHD1L to DNA damage sites. Mono-ADP-ribosylated at Lys-523 by SIRT6 in response to oxidative stress, promoting recruitment to double-strand breaks (DSBs) sites. S-nitrosylated, leading to inhibit transcription regulation activity. Post-translationally, phosphorylated at Thr-596 by PRKDC in response to DNA damage following virus infection, promoting its translocation to the cytosol. Phosphorylated by TXK. In terms of processing, proteolytically cleaved by caspase-3 (CASP3) and caspase-7 (CASP7) in response to apoptosis to generate the Poly [ADP-ribose] polymerase 1, processed N-terminus and Poly [ADP-ribose] polymerase 1, processed C-terminus forms. Sumoylated with SUMO1 or SUMO2 by PIAS4 following prolonged residence (trapping) to chromatin. Sumoylation promotes ubiquitination by RNF4 and removal from chromatin by VCP/p97. Post-translationally, ubiquitinated by RNF4 following sumoylation by PIAS4 in response to prolonged residence (trapping) to chromatin. Ubiquitination promotes removal from chromatin by VCP/p97.

It localises to the chromosome. It is found in the nucleus. The protein resides in the nucleolus. Its subcellular location is the cytoplasm. The protein localises to the cytosol. The enzyme catalyses NAD(+) + (ADP-D-ribosyl)n-acceptor = nicotinamide + (ADP-D-ribosyl)n+1-acceptor + H(+).. It carries out the reaction L-seryl-[protein] + NAD(+) = O-(ADP-D-ribosyl)-L-seryl-[protein] + nicotinamide + H(+). The catalysed reaction is L-aspartyl-[protein] + NAD(+) = 4-O-(ADP-D-ribosyl)-L-aspartyl-[protein] + nicotinamide. It catalyses the reaction L-glutamyl-[protein] + NAD(+) = 5-O-(ADP-D-ribosyl)-L-glutamyl-[protein] + nicotinamide. The enzyme catalyses L-tyrosyl-[protein] + NAD(+) = O-(ADP-D-ribosyl)-L-tyrosyl-[protein] + nicotinamide + H(+). It carries out the reaction L-histidyl-[protein] + NAD(+) = N(tele)-(ADP-D-ribosyl)-L-histidyl-[protein] + nicotinamide + H(+). With respect to regulation, ADP-ribosyltransferase activity is regulated via an allosteric activation mechanism. In absence of activation signal, PARP1 is autoinhibited by the PARP alpha-helical domain (also named HD region), which prevents effective NAD(+)-binding. Activity is highly stimulated by signals, such as DNA strand breaks. Binding to damaged DNA unfolds the PARP alpha-helical domain, relieving autoinhibition. Poly-ADP-ribosyltransferase activity is tightly regulated and PARP1 is removed from damaged chromatin following initial poly-ADP-ribosylation of chromatin to avoid prolonged residence (trapping) that has cytotoxic consequences. A number of factors (VCP/p97) or post-translational modifications (auto-poly-ADP-ribosylation or ubiquitination) promote PARP1 removal from chromatin. Functionally, poly-ADP-ribosyltransferase that mediates poly-ADP-ribosylation of proteins and plays a key role in DNA repair. Mediates glutamate, aspartate, serine, histidine or tyrosine ADP-ribosylation of proteins: the ADP-D-ribosyl group of NAD(+) is transferred to the acceptor carboxyl group of target residues and further ADP-ribosyl groups are transferred to the 2'-position of the terminal adenosine moiety, building up a polymer with an average chain length of 20-30 units. Serine ADP-ribosylation of proteins constitutes the primary form of ADP-ribosylation of proteins in response to DNA damage. Specificity for the different amino acids is conferred by interacting factors, such as HPF1 and NMNAT1. Following interaction with HPF1, catalyzes serine ADP-ribosylation of target proteins; HPF1 confers serine specificity by completing the PARP1 active site. Also catalyzes tyrosine ADP-ribosylation of target proteins following interaction with HPF1. Following interaction with NMNAT1, catalyzes glutamate and aspartate ADP-ribosylation of target proteins; NMNAT1 confers glutamate and aspartate specificity. PARP1 initiates the repair of DNA breaks: recognizes and binds DNA breaks within chromatin and recruits HPF1, licensing serine ADP-ribosylation of target proteins, such as histones (H2BS6ADPr and H3S10ADPr), thereby promoting decompaction of chromatin and the recruitment of repair factors leading to the reparation of DNA strand breaks. HPF1 initiates serine ADP-ribosylation but restricts the polymerase activity of PARP1 in order to limit the length of poly-ADP-ribose chains. In addition to base excision repair (BER) pathway, also involved in double-strand breaks (DSBs) repair: together with TIMELESS, accumulates at DNA damage sites and promotes homologous recombination repair by mediating poly-ADP-ribosylation. Mediates the poly-ADP-ribosylation of a number of proteins, including itself, APLF, CHFR and NFAT5. In addition to proteins, also able to ADP-ribosylate DNA: catalyzes ADP-ribosylation of DNA strand break termini containing terminal phosphates and a 2'-OH group in single- and double-stranded DNA, respectively. Required for PARP9 and DTX3L recruitment to DNA damage sites. PARP1-dependent PARP9-DTX3L-mediated ubiquitination promotes the rapid and specific recruitment of 53BP1/TP53BP1, UIMC1/RAP80, and BRCA1 to DNA damage sites. PARP1-mediated DNA repair in neurons plays a role in sleep: senses DNA damage in neurons and promotes sleep, facilitating efficient DNA repair. In addition to DNA repair, also involved in other processes, such as transcription regulation, programmed cell death, membrane repair, adipogenesis and innate immunity. Acts as a repressor of transcription: binds to nucleosomes and modulates chromatin structure in a manner similar to histone H1, thereby altering RNA polymerase II. Acts both as a positive and negative regulator of transcription elongation, depending on the context. Acts as a positive regulator of transcription elongation by mediating poly-ADP-ribosylation of NELFE, preventing RNA-binding activity of NELFE and relieving transcription pausing. Acts as a negative regulator of transcription elongation in response to DNA damage by catalyzing poly-ADP-ribosylation of CCNT1, disrupting the phase separation activity of CCNT1 and subsequent activation of CDK9. Involved in replication fork progression following interaction with CARM1: mediates poly-ADP-ribosylation at replication forks, slowing fork progression. Poly-ADP-ribose chains generated by PARP1 also play a role in poly-ADP-ribose-dependent cell death, a process named parthanatos. Also acts as a negative regulator of the cGAS-STING pathway. Acts by mediating poly-ADP-ribosylation of CGAS: PARP1 translocates into the cytosol following phosphorylation by PRKDC and catalyzes poly-ADP-ribosylation and inactivation of CGAS. Acts as a negative regulator of adipogenesis: catalyzes poly-ADP-ribosylation of histone H2B on 'Glu-35' (H2BE35ADPr) following interaction with NMNAT1, inhibiting phosphorylation of H2B at 'Ser-36' (H2BS36ph), thereby blocking expression of pro-adipogenetic genes. Involved in the synthesis of ATP in the nucleus, together with NMNAT1, PARG and NUDT5. Nuclear ATP generation is required for extensive chromatin remodeling events that are energy-consuming. Promotes AIFM1-mediated apoptosis. This form, which translocates into the cytoplasm following cleavage by caspase-3 (CASP3) and caspase-7 (CASP7) in response to apoptosis, is auto-poly-ADP-ribosylated and serves as a poly-ADP-ribose carrier to induce AIFM1-mediated apoptosis. Its function is as follows. This cleavage form irreversibly binds to DNA breaks and interferes with DNA repair, promoting DNA damage-induced apoptosis. This Bos taurus (Bovine) protein is Poly [ADP-ribose] polymerase 1 (PARP1).